A 95-amino-acid polypeptide reads, in one-letter code: Large ribosomal subunit protein uL23 (95 aa).

It belongs to the universal ribosomal protein uL23 family. Part of the 50S ribosomal subunit. Contacts protein L29, and trigger factor when it is bound to the ribosome.

In terms of biological role, one of the early assembly proteins it binds 23S rRNA. One of the proteins that surrounds the polypeptide exit tunnel on the outside of the ribosome. Forms the main docking site for trigger factor binding to the ribosome. The sequence is that of Large ribosomal subunit protein uL23 from Coxiella burnetii (strain CbuK_Q154) (Coxiella burnetii (strain Q154)).